A 514-amino-acid chain; its full sequence is MSVSKKPMVLVILDGYGYREEQQDNAIFSAKTPVMDALWANRPHTLIDASGLEVGLPDRQMGNSEVGHVNLGAGRIVYQDLTRLDVEIKDRAFFANPVLTGAVDKAKNAGKAVHIMGLLSAGGVHSHEDHIMAMVELAAERGAEKIYLHAFLDGRDTPPRSAESSLKKFEEKFAALGKGRVASIIGRYYAMDRDNRWDRVEKAYDLLTLAQGEFQADTAVAGLQAAYARDENDEFVKATVIRAEGQPDAAMEDGDALIFMNFRADRAREITRAFVNADFDGFARKKVVNVDFVMLTEYAADIKTAVAYPPASLVNTFGEWMAKNDKTQLRISETEKYAHVTFFFNGGVEESFKGEDRILINSPKVATYDLQPEMSSAELTEKLVAAIKSGKYDTIICNYPNGDMVGHTGVMEAAVKAVEALDHCVEEVAKAVESVGGQLLITADHGNAEQMRDPATGQAHTAHTNLPVPLIYVGDKNVKAVEGGKLSDIAPTMLSLMGMEIPQEMTGKPLFIVE.

Mn(2+) is bound by residues Asp-14 and Ser-64. Ser-64 serves as the catalytic Phosphoserine intermediate. Residues His-125, 155–156, Arg-187, Arg-193, 263–266, and Lys-336 each bind substrate; these read RD and RADR. The Mn(2+) site is built by Asp-403, His-407, Asp-444, His-445, and His-463.

The protein belongs to the BPG-independent phosphoglycerate mutase family. As to quaternary structure, monomer. It depends on Mn(2+) as a cofactor.

It catalyses the reaction (2R)-2-phosphoglycerate = (2R)-3-phosphoglycerate. It functions in the pathway carbohydrate degradation; glycolysis; pyruvate from D-glyceraldehyde 3-phosphate: step 3/5. Its function is as follows. Catalyzes the interconversion of 2-phosphoglycerate and 3-phosphoglycerate. This is 2,3-bisphosphoglycerate-independent phosphoglycerate mutase from Escherichia coli O1:K1 / APEC.